A 153-amino-acid chain; its full sequence is MAGKVLNKVMGFLGLEDEYEYEEYYEDTDELENSNESAEFEPIIHSNKKQGKVVSIHSTSTPKVSIVKPKTYDEVVDICDDLKDGKIVIVNSIELDPKVGQRLVDFVSGATYSLNGTLEEIEKGIYILSPSNVEVDSELKNQLSSKGMFSWNR.

This sequence belongs to the SepF family. In terms of assembly, homodimer. Interacts with FtsZ.

Its subcellular location is the cytoplasm. Functionally, cell division protein that is part of the divisome complex and is recruited early to the Z-ring. Probably stimulates Z-ring formation, perhaps through the cross-linking of FtsZ protofilaments. Its function overlaps with FtsA. This is Cell division protein SepF from Clostridium tetani (strain Massachusetts / E88).